Reading from the N-terminus, the 226-residue chain is Nucleoside triphosphate pyrophosphatase (226 aa).

The active-site Proton acceptor is Asp-79. Positions Trp-204–Ala-226 are disordered. Polar residues predominate over residues Arg-206–Pro-220.

The protein belongs to the Maf family. A divalent metal cation is required as a cofactor.

Its subcellular location is the cytoplasm. The catalysed reaction is a ribonucleoside 5'-triphosphate + H2O = a ribonucleoside 5'-phosphate + diphosphate + H(+). It carries out the reaction a 2'-deoxyribonucleoside 5'-triphosphate + H2O = a 2'-deoxyribonucleoside 5'-phosphate + diphosphate + H(+). In terms of biological role, nucleoside triphosphate pyrophosphatase. May have a dual role in cell division arrest and in preventing the incorporation of modified nucleotides into cellular nucleic acids. The protein is Nucleoside triphosphate pyrophosphatase of Salinispora tropica (strain ATCC BAA-916 / DSM 44818 / JCM 13857 / NBRC 105044 / CNB-440).